The primary structure comprises 257 residues: Phosphate import ATP-binding protein PstB (257 aa).

The 243-residue stretch at leucine 4 to lysine 246 folds into the ABC transporter domain. Glycine 36 to serine 43 lines the ATP pocket.

It belongs to the ABC transporter superfamily. Phosphate importer (TC 3.A.1.7) family. In terms of assembly, the complex is composed of two ATP-binding proteins (PstB), two transmembrane proteins (PstC and PstA) and a solute-binding protein (PstS).

It localises to the cell membrane. It catalyses the reaction phosphate(out) + ATP + H2O = ADP + 2 phosphate(in) + H(+). In terms of biological role, part of the ABC transporter complex PstSACB involved in phosphate import. Responsible for energy coupling to the transport system. This Corynebacterium glutamicum (strain ATCC 13032 / DSM 20300 / JCM 1318 / BCRC 11384 / CCUG 27702 / LMG 3730 / NBRC 12168 / NCIMB 10025 / NRRL B-2784 / 534) protein is Phosphate import ATP-binding protein PstB.